A 203-amino-acid polypeptide reads, in one-letter code: Glycerol-3-phosphate acyltransferase (203 aa).

The next 5 membrane-spanning stretches (helical) occupy residues 4–24, 56–76, 80–100, 115–135, and 149–169; these read IAYL…AVIF, LGVL…GFYL, ISVI…PVFF, IIPM…FVFL, and LIVP…VALV.

This sequence belongs to the PlsY family. As to quaternary structure, probably interacts with PlsX.

It localises to the cell inner membrane. It catalyses the reaction an acyl phosphate + sn-glycerol 3-phosphate = a 1-acyl-sn-glycero-3-phosphate + phosphate. The protein operates within lipid metabolism; phospholipid metabolism. Catalyzes the transfer of an acyl group from acyl-phosphate (acyl-PO(4)) to glycerol-3-phosphate (G3P) to form lysophosphatidic acid (LPA). This enzyme utilizes acyl-phosphate as fatty acyl donor, but not acyl-CoA or acyl-ACP. The sequence is that of Glycerol-3-phosphate acyltransferase from Glaesserella parasuis serovar 5 (strain SH0165) (Haemophilus parasuis).